Here is a 447-residue protein sequence, read N- to C-terminus: Alpha-1,6-mannosyl-glycoprotein 2-beta-N-acetylglucosaminyltransferase (447 aa).

The Cytoplasmic portion of the chain corresponds to 1 to 9; that stretch reads MRFRIYKRK. Residues 10 to 29 form a helical; Signal-anchor for type II membrane protein membrane-spanning segment; it reads VLILTLVVAACGFVLWSSNG. At 30–447 the chain is on the lumenal side; the sequence is RQRKNEALAP…ELCKSYRRLQ (418 aa). N-linked (GlcNAc...) asparagine glycosylation is found at asparagine 69 and asparagine 86. Substrate contacts are provided by residues 123–127 and aspartate 154; that span reads QVHNR. Cysteine 196 and cysteine 210 are joined by a disulfide. Residue 229–233 participates in substrate binding; the sequence is QTKHH. Aspartate 261 provides a ligand contact to Mn(2+). Cysteines 283 and 286 form a disulfide. Substrate is bound at residue arginine 298. 3 disulfides stabilise this stretch: cysteine 334/cysteine 357, cysteine 339/cysteine 440, and cysteine 378/cysteine 386. Residue histidine 374 participates in Mn(2+) binding.

It belongs to the glycosyltransferase 16 (GT16) protein family. In terms of assembly, homodimer. Requires Mn(2+) as cofactor.

Its subcellular location is the golgi apparatus membrane. It carries out the reaction an N(4)-{beta-D-GlcNAc-(1-&gt;2)-alpha-D-Man-(1-&gt;3)-[alpha-D-Man-(1-&gt;6)]-beta-D-Man-(1-&gt;4)-beta-D-GlcNAc-(1-&gt;4)-beta-D-GlcNAc}-L-asparaginyl-[protein] + UDP-N-acetyl-alpha-D-glucosamine = N(4)-{beta-D-GlcNAc-(1-&gt;2)-alpha-D-Man-(1-&gt;3)-[beta-D-GlcNAc-(1-&gt;2)-alpha-D-Man-(1-&gt;6)]-beta-D-Man-(1-&gt;4)-beta-D-GlcNAc-(1-&gt;4)-beta-D-GlcNAc}-L-asparaginyl-[protein] + UDP + H(+). It participates in protein modification; protein glycosylation. Its function is as follows. Plays an essential role in protein N-glycosylation. Catalyzes the transfer of N-acetylglucosamine (GlcNAc) onto the free terminal mannose moiety in the core structure of the nascent N-linked glycan chain, giving rise to the second branch in complex glycans. The sequence is that of Alpha-1,6-mannosyl-glycoprotein 2-beta-N-acetylglucosaminyltransferase (MGAT2) from Homo sapiens (Human).